We begin with the raw amino-acid sequence, 510 residues long: NAD(P)H-quinone oxidoreductase subunit 2 A, chloroplastic (510 aa).

13 helical membrane-spanning segments follow: residues 24–44 (LLLFHGSFIFPECILIFGLIL), 57–77 (IPWLYFISSTSLVMSITALLF), 99–119 (IFQFLILLCSTLCIPLSVEYI), 124–144 (MAITEFLLFVLTATLGGMFLC), 149–169 (LITIFVAPECFSLCSYLLSGY), 183–203 (YLLMGGASSSILVHGFSWLYG), 229–249 (ISIALIFITVGIGFKLSPAPF), 295–315 (WHLLLEILAILSMILGNLIAI), 323–343 (MLAYSSIGQIGYVIIGIIVGD), 354–374 (YMLFYISMNLGTFACIVLFGL), 395–415 (ALSSALCLLSLGGLPPLAGFF), 418–438 (LYLFWCGWQAGLYFLVSIGLL), and 484–504 (MILCVIASTIPGISMNPIIAI).

It belongs to the complex I subunit 2 family. NDH is composed of at least 16 different subunits, 5 of which are encoded in the nucleus.

The protein resides in the plastid. It localises to the chloroplast thylakoid membrane. The enzyme catalyses a plastoquinone + NADH + (n+1) H(+)(in) = a plastoquinol + NAD(+) + n H(+)(out). It catalyses the reaction a plastoquinone + NADPH + (n+1) H(+)(in) = a plastoquinol + NADP(+) + n H(+)(out). In terms of biological role, NDH shuttles electrons from NAD(P)H:plastoquinone, via FMN and iron-sulfur (Fe-S) centers, to quinones in the photosynthetic chain and possibly in a chloroplast respiratory chain. The immediate electron acceptor for the enzyme in this species is believed to be plastoquinone. Couples the redox reaction to proton translocation, and thus conserves the redox energy in a proton gradient. This is NAD(P)H-quinone oxidoreductase subunit 2 A, chloroplastic from Piper cenocladum (Ant piper).